Reading from the N-terminus, the 21-residue chain is Testis ecdysiotropin peptide 1 (21 aa).

The tract at residues 1-21 (ISDFDEYEPLNDADNNEVLDF) is disordered.

Its function is as follows. Start or boost ecdysteroid synthesis in testis of larvae and pupae. The sequence is that of Testis ecdysiotropin peptide 1 from Lymantria dispar (Gypsy moth).